We begin with the raw amino-acid sequence, 267 residues long: U6 snRNA phosphodiesterase 1 (267 aa).

The disordered stretch occupies residues 1–72 (MNAAPLVGYS…EDDSARHGGR (72 aa)). The active-site Proton acceptor is the histidine 122. An AMP-binding site is contributed by 122 to 124 (HLS). UMP is bound by residues glutamine 166, tyrosine 204, and 208–212 (SFHVS). AMP contacts are provided by residues tyrosine 204 and 206-212 (DPSFHVS). The Proton donor role is filled by histidine 210.

This sequence belongs to the 2H phosphoesterase superfamily. USB1 family. Interacts with PLRG1, CDC5L and PRPF19.

Its subcellular location is the nucleus. It catalyses the reaction a 3'-end uridylyl-uridine-RNA = a 3'-end 2',3'-cyclophospho-uridine-RNA + uridine. It carries out the reaction a 3'-end uridylyl-adenosine-RNA = a 3'-end 2',3'-cyclophospho-uridine-RNA + adenosine. Its function is as follows. 3'-5' RNA exonuclease that trims the 3' end of oligo(U) and oligo(A) tracts of the pre-U6 small nuclear RNA (snRNA) molecule, leading to the formation of a mature U6 snRNA 3' end-terminated with a 2',3'-cyclic phosphate. Participates in the U6 snRNA 3' end processing that prevents U6 snRNA degradation. In addition also removes uridines from the 3' end of U6atac snRNA and possibly the vault RNA VTRNA1-1. This Rattus norvegicus (Rat) protein is U6 snRNA phosphodiesterase 1.